The following is a 66-amino-acid chain: MPKLKTKSGTKKRFKLTASGKVKRGQTGKRHGMIKRTNKQIRNKRGTTIMADADAARVIKNFMPYA.

The protein belongs to the bacterial ribosomal protein bL35 family.

In Parvibaculum lavamentivorans (strain DS-1 / DSM 13023 / NCIMB 13966), this protein is Large ribosomal subunit protein bL35.